A 139-amino-acid polypeptide reads, in one-letter code: Large ribosomal subunit protein uL16 (139 aa).

Basic residues predominate over residues 1 to 20 (MLMPRRVKHRKQHHPTRRGA). Residues 1–24 (MLMPRRVKHRKQHHPTRRGAAKGG) form a disordered region.

Belongs to the universal ribosomal protein uL16 family. Part of the 50S ribosomal subunit.

Functionally, binds 23S rRNA and is also seen to make contacts with the A and possibly P site tRNAs. This chain is Large ribosomal subunit protein uL16, found in Nocardioides sp. (strain ATCC BAA-499 / JS614).